A 239-amino-acid polypeptide reads, in one-letter code: Phosphoribosylaminoimidazole-succinocarboxamide synthase (239 aa).

It belongs to the SAICAR synthetase family.

The catalysed reaction is 5-amino-1-(5-phospho-D-ribosyl)imidazole-4-carboxylate + L-aspartate + ATP = (2S)-2-[5-amino-1-(5-phospho-beta-D-ribosyl)imidazole-4-carboxamido]succinate + ADP + phosphate + 2 H(+). The protein operates within purine metabolism; IMP biosynthesis via de novo pathway; 5-amino-1-(5-phospho-D-ribosyl)imidazole-4-carboxamide from 5-amino-1-(5-phospho-D-ribosyl)imidazole-4-carboxylate: step 1/2. The chain is Phosphoribosylaminoimidazole-succinocarboxamide synthase from Acinetobacter baumannii (strain AB307-0294).